We begin with the raw amino-acid sequence, 977 residues long: GAS2-like protein pickled eggs (977 aa).

Residues 20 to 159 (EAMREDLAEW…CLLEVARRGA (140 aa)) form the Calponin-homology (CH) domain. The disordered stretch occupies residues 218-245 (VETDLYDDSDDSETEDDGDQNPVLMYGP). Positions 221 to 236 (DLYDDSDDSETEDDGD) are enriched in acidic residues. A GAR domain is found at 252–324 (NDLKSLDEMV…HYLDKHDPCR (73 aa)). Disordered regions lie at residues 397 to 543 (PTLQ…SEIS), 557 to 624 (AQKR…VCDG), 666 to 685 (VANT…RSPL), 693 to 803 (IDNS…KGRS), and 910 to 977 (NLER…TELY). Composition is skewed to polar residues over residues 399 to 428 (LQNG…NQQA) and 436 to 454 (ATGS…QLLG). Residues 502-527 (GGSGVGSAAGGVSSGSAGSGVAGEQG) are compositionally biased toward gly residues. Residues 577-589 (RLDQTSSDSQISP) are compositionally biased toward polar residues. The span at 601–620 (ILEEEDLNGQDREEDQEDYS) shows a compositional bias: acidic residues. Composition is skewed to polar residues over residues 666–677 (VANTMGNPTPNL) and 731–741 (TRNSTGATTTP). A compositionally biased stretch (low complexity) spans 928-953 (SSAASSCESNNSNAGAGSGAAAGSAS).

It belongs to the GAS2 family. Expressed in the ovary and the ring canals of the germline cells. In larvae, expressed in the notal region of the wing disk.

Its subcellular location is the cytoplasm. It is found in the cytoskeleton. It localises to the cell cortex. In terms of biological role, essential for development and viability. Required for ovary development and oogenesis, and is essential for the development of the indirect flight muscles. May act as a negative regulator of the Notch signaling pathway in certain tissues, such as the muscle precursors and ovaries. May function as a linker protein between the actin and microtubule cytoskeletons. The chain is GAS2-like protein pickled eggs from Drosophila melanogaster (Fruit fly).